The following is a 335-amino-acid chain: uncharacterized protein (335 aa).

Residues 21-258 (VMTSDLRKVY…QNTYHVQGQN (238 aa)) form the ABC transporter domain. 60–67 (GPNGAGKT) is an ATP binding site.

It belongs to the ABC transporter superfamily.

This is an uncharacterized protein from Nostoc sp. (strain PCC 7120 / SAG 25.82 / UTEX 2576).